Here is a 351-residue protein sequence, read N- to C-terminus: Phospho-N-acetylmuramoyl-pentapeptide-transferase (351 aa).

The next 10 helical transmembrane spans lie at I22–W42, T65–T85, F87–I107, F128–D148, Y158–M178, G190–V210, L225–L245, V254–V274, L279–V299, and K328–I348.

It belongs to the glycosyltransferase 4 family. MraY subfamily. Requires Mg(2+) as cofactor.

It is found in the cell inner membrane. The catalysed reaction is UDP-N-acetyl-alpha-D-muramoyl-L-alanyl-gamma-D-glutamyl-meso-2,6-diaminopimeloyl-D-alanyl-D-alanine + di-trans,octa-cis-undecaprenyl phosphate = di-trans,octa-cis-undecaprenyl diphospho-N-acetyl-alpha-D-muramoyl-L-alanyl-D-glutamyl-meso-2,6-diaminopimeloyl-D-alanyl-D-alanine + UMP. The protein operates within cell wall biogenesis; peptidoglycan biosynthesis. In terms of biological role, catalyzes the initial step of the lipid cycle reactions in the biosynthesis of the cell wall peptidoglycan: transfers peptidoglycan precursor phospho-MurNAc-pentapeptide from UDP-MurNAc-pentapeptide onto the lipid carrier undecaprenyl phosphate, yielding undecaprenyl-pyrophosphoryl-MurNAc-pentapeptide, known as lipid I. This is Phospho-N-acetylmuramoyl-pentapeptide-transferase from Nautilia profundicola (strain ATCC BAA-1463 / DSM 18972 / AmH).